The following is a 387-amino-acid chain: Phosphoglycerate kinase (387 aa).

Substrate-binding positions include 21–23, Arg-36, 59–62, Arg-113, and Arg-146; these read DLN and HLGR. Residues Lys-197, Glu-314, and 340–343 each bind ATP; that span reads GGDT.

It belongs to the phosphoglycerate kinase family. Monomer.

It localises to the cytoplasm. The enzyme catalyses (2R)-3-phosphoglycerate + ATP = (2R)-3-phospho-glyceroyl phosphate + ADP. It participates in carbohydrate degradation; glycolysis; pyruvate from D-glyceraldehyde 3-phosphate: step 2/5. The sequence is that of Phosphoglycerate kinase from Klebsiella pneumoniae (strain 342).